Here is a 143-residue protein sequence, read N- to C-terminus: Large ribosomal subunit protein bL17 (143 aa).

Belongs to the bacterial ribosomal protein bL17 family. Part of the 50S ribosomal subunit. Contacts protein L32.

This chain is Large ribosomal subunit protein bL17, found in Bartonella quintana (strain Toulouse) (Rochalimaea quintana).